Reading from the N-terminus, the 293-residue chain is MSSYTMQLRTYIEMWSQGETGLSTAEKIEKGRPKLFDFNYPIFDESYRTIFETHFIRNFYMREIGFETEGLFKFHLETWLMINMPYFNKLFESELIKYDPLENTRVGVKSNTKNDTDRNDNRDVKQDLTSNGTSSTDAKQNDTSKTTGNEKSSGSGSITDDNFKRDLNADTADDRLQLTTKDGEGVLEYASQIEEHNENKKRDTKTSNTTDTTSNTTGTSTLDSDSKTSNKANTTSNDKLNSQINSVEDYIEDRVGKIGTQSYARLVMDYREALLRIEQRIFNEMQELFMLVY.

2 disordered regions span residues 106–166 (VGVK…FKRD) and 192–240 (QIEE…NDKL). The segment covering 112–126 (TKNDTDRNDNRDVKQ) has biased composition (basic and acidic residues). A compositionally biased stretch (polar residues) spans 127–160 (DLTSNGTSSTDAKQNDTSKTTGNEKSSGSGSITD). Residues 193 to 205 (IEEHNENKKRDTK) show a composition bias toward basic and acidic residues. Residues 206 to 231 (TSNTTDTTSNTTGTSTLDSDSKTSNK) are compositionally biased toward low complexity.

The protein belongs to the phi29likevirus proximal tail tube connector protein family.

It localises to the virion. Functionally, forms the proximal part of the tail tube. This chain is Proximal tail tube connector protein (11), found in Bacillus phage PZA (Bacteriophage PZA).